The sequence spans 150 residues: UPF0178 protein AHA_0543 (150 aa).

This sequence belongs to the UPF0178 family.

This Aeromonas hydrophila subsp. hydrophila (strain ATCC 7966 / DSM 30187 / BCRC 13018 / CCUG 14551 / JCM 1027 / KCTC 2358 / NCIMB 9240 / NCTC 8049) protein is UPF0178 protein AHA_0543.